The chain runs to 704 residues: Low calcium response locus protein D (704 aa).

A run of 7 helical transmembrane segments spans residues I18–L35, I42–I61, F108–I132, A200–T220, I235–V259, V278–L297, and V304–L320.

Belongs to the FHIPEP (flagella/HR/invasion proteins export pore) family.

It is found in the cell inner membrane. Functionally, could be involved in the secretion of the yop virulence proteins. The chain is Low calcium response locus protein D (lcrD) from Yersinia pestis.